Here is a 364-residue protein sequence, read N- to C-terminus: Coproporphyrin III ferrochelatase (364 aa).

The Fe-coproporphyrin III site is built by Arg29 and Tyr118. Residues His169 and Glu250 each coordinate Fe(2+).

The protein belongs to the ferrochelatase family.

Its subcellular location is the cytoplasm. The enzyme catalyses Fe-coproporphyrin III + 2 H(+) = coproporphyrin III + Fe(2+). The protein operates within porphyrin-containing compound metabolism; protoheme biosynthesis. Functionally, involved in coproporphyrin-dependent heme b biosynthesis. Catalyzes the insertion of ferrous iron into coproporphyrin III to form Fe-coproporphyrin III. In Streptococcus pneumoniae serotype 2 (strain D39 / NCTC 7466), this protein is Coproporphyrin III ferrochelatase.